The sequence spans 426 residues: Serine--tRNA ligase (426 aa).

Residue 230–232 (TAE) participates in L-serine binding. Residue 261-263 (RSE) coordinates ATP. Residue Glu-284 coordinates L-serine. An ATP-binding site is contributed by 348–351 (EISS). Ser-384 provides a ligand contact to L-serine.

The protein belongs to the class-II aminoacyl-tRNA synthetase family. Type-1 seryl-tRNA synthetase subfamily. As to quaternary structure, homodimer. The tRNA molecule binds across the dimer.

The protein resides in the cytoplasm. The enzyme catalyses tRNA(Ser) + L-serine + ATP = L-seryl-tRNA(Ser) + AMP + diphosphate + H(+). It carries out the reaction tRNA(Sec) + L-serine + ATP = L-seryl-tRNA(Sec) + AMP + diphosphate + H(+). It functions in the pathway aminoacyl-tRNA biosynthesis; selenocysteinyl-tRNA(Sec) biosynthesis; L-seryl-tRNA(Sec) from L-serine and tRNA(Sec): step 1/1. Catalyzes the attachment of serine to tRNA(Ser). Is also able to aminoacylate tRNA(Sec) with serine, to form the misacylated tRNA L-seryl-tRNA(Sec), which will be further converted into selenocysteinyl-tRNA(Sec). This Streptococcus mutans serotype c (strain ATCC 700610 / UA159) protein is Serine--tRNA ligase.